Here is a 249-residue protein sequence, read N- to C-terminus: (S)-1-Phenylethanol dehydrogenase (249 aa).

NAD(+) contacts are provided by residues 17–19 (NGI), D38, 61–63 (CDV), N89, and Y93. S141 lines the substrate pocket. The Proton acceptor role is filled by Y154. NAD(+) is bound by residues K158, 184 to 187 (PSLV), and T191.

It belongs to the short-chain dehydrogenases/reductases (SDR) family. In terms of assembly, homotetramer.

It carries out the reaction (S)-1-phenylethanol + NAD(+) = acetophenone + NADH + H(+). Functionally, catalyzes the NAD-dependent stereospecific oxidation of (S)-1-phenylethanol to acetophenone in the degradation of ethylbenzene. The chain is (S)-1-Phenylethanol dehydrogenase (ped) from Aromatoleum aromaticum (strain DSM 19018 / LMG 30748 / EbN1) (Azoarcus sp. (strain EbN1)).